A 3843-amino-acid chain; its full sequence is NBPF family member NBPF19 (3843 aa).

Positions 70 to 130 (MLRNERQFKE…RSLNEHLQAL (61 aa)) form a coiled coil. Olduvai domains lie at 165–257 (ENDN…HIIP), 258–329 (ENES…VDIG), 330–421 (RHRW…PSCP), 424–479 (SREL…LDVD), 480–572 (RIKK…RSKK), 573–665 (ERRR…PSCP), 668–723 (SREL…LDVD), 724–816 (RIKK…RSKK), 817–909 (ERRR…PSCP), 912–967 (SREL…LDVD), 968–1060 (RIKK…RSKK), 1061–1153 (ERRR…PSCP), 1156–1211 (SREL…LDVD), 1212–1304 (RIKK…RSKK), 1305–1397 (ERRR…PSCP), 1400–1455 (SREL…LDVD), 1456–1548 (RIKK…RSKK), 1549–1641 (ERRR…PSCP), 1644–1699 (SREL…LDVD), 1700–1792 (RIKK…RSKK), 1793–1885 (ERRR…PSCP), 1888–1943 (SREL…LDVD), 1944–2036 (RIKK…RSKK), 2037–2129 (ERRR…PSCP), 2132–2187 (SREL…LDVD), 2188–2280 (RIKK…RSKK), 2281–2373 (ERRR…PSCP), 2376–2431 (SREL…LDVD), 2432–2524 (RIKK…RSKK), 2525–2617 (ERRR…PSCP), 2620–2675 (SREL…LDVD), 2676–2768 (RIKK…RSKK), 2769–2861 (ERRR…PSCP), 2864–2919 (SREL…LDVD), 2920–3012 (RIKK…RSKK), 3013–3105 (ERRR…PSCP), 3108–3163 (SREL…LDVD), 3164–3256 (RIKK…RSKK), 3257–3349 (ERRR…PSCP), 3352–3407 (SREL…LDVD), 3408–3500 (RIKK…RSKK), 3501–3593 (ERRR…PSCP), 3596–3651 (SREL…LDVD), 3652–3744 (RIKK…RSKK), and 3745–3843 (ERRR…IFPQ). Disordered stretches follow at residues 180 to 203 (EKVQKSSAPREMQKAEEKEVPEDS) and 249 to 295 (WEDA…EGYS). Acidic residues-rich tracts occupy residues 259-268 (NESDDEEEEE) and 279-291 (ESEEEEVPQESWD). The interval 559–597 (KGKGKKRRGRRSKKERRRGRKEGEEDQNPPCPRLSRELL) is disordered. Residues 560–578 (GKGKKRRGRRSKKERRRGR) are compositionally biased toward basic residues. The segment at 803-841 (KGKGKKRRGRRSKKERRRGRKEGEEDQNPPCPRLSRELL) is disordered. Residues 804 to 822 (GKGKKRRGRRSKKERRRGR) show a composition bias toward basic residues. The segment at 1047–1085 (KGKGKKRRGRRSKKERRRGRKEGEEDQNPPCPRLSRELL) is disordered. Residues 1048–1066 (GKGKKRRGRRSKKERRRGR) are compositionally biased toward basic residues. Residues 1291-1329 (KGKGKKRRGRRSKKERRRGRKEGEEDQNPPCPRLSRELL) form a disordered region. Residues 1292-1310 (GKGKKRRGRRSKKERRRGR) show a composition bias toward basic residues. Residues 1535–1573 (KGKGKKRRGRRSKKERRRGRKEGEEDQNPPCPRLSRELL) are disordered. A compositionally biased stretch (basic residues) spans 1536–1554 (GKGKKRRGRRSKKERRRGR). Residues 1779–1817 (KGKGKKRRGRRSKKERRRGRKEGEEDQNPPCPRLSRELL) are disordered. The segment covering 1780–1798 (GKGKKRRGRRSKKERRRGR) has biased composition (basic residues). The segment at 2023 to 2061 (KGKGKKRRGRRSKKERRRGRKEGEEDQNPPCPRLSRELL) is disordered. Over residues 2024 to 2042 (GKGKKRRGRRSKKERRRGR) the composition is skewed to basic residues. The interval 2267-2305 (KGKGKKRRGRRSKKERRRGRKEGEEDQNPPCPRLSRELL) is disordered. The segment covering 2268–2286 (GKGKKRRGRRSKKERRRGR) has biased composition (basic residues). Residues 2511–2549 (KGKGKKRRGRRSKKERRRGRKEGEEDQNPPCPRLSRELL) form a disordered region. Basic residues predominate over residues 2512-2530 (GKGKKRRGRRSKKERRRGR). Residues 2755-2793 (KGKGKKRRGRRSKKERRRGRKEGEEDQNPPCPRLSRELL) are disordered. Basic residues predominate over residues 2756–2774 (GKGKKRRGRRSKKERRRGR). The tract at residues 2999–3037 (KGKGKKRRGRRSKKERRRGRKEGEEDQNPPCPRLSRELL) is disordered. Over residues 3000–3018 (GKGKKRRGRRSKKERRRGR) the composition is skewed to basic residues. Residues 3243-3281 (KGKGKKRRGRRSKKERRRGRKEGEEDQNPPCPRLSRELL) are disordered. The segment covering 3244-3262 (GKGKKRRGRRSKKERRRGR) has biased composition (basic residues). The disordered stretch occupies residues 3487-3525 (KGKGKKRRGRRSKKERRRGRKEGEEDQNPPCPRLSRELL). The span at 3488–3506 (GKGKKRRGRRSKKERRRGR) shows a compositional bias: basic residues. The segment at 3731-3764 (KGKGKKRRGRRSKKERRRGRKEGEEDQNPPCPRL) is disordered. Residues 3732-3750 (GKGKKRRGRRSKKERRRGR) show a composition bias toward basic residues.

This sequence belongs to the NBPF family.

The protein resides in the cytoplasm. The polypeptide is NBPF family member NBPF19 (Homo sapiens (Human)).